Consider the following 427-residue polypeptide: 3-phosphoshikimate 1-carboxyvinyltransferase (427 aa).

K20, S21, and R25 together coordinate 3-phosphoshikimate. Residue K20 participates in phosphoenolpyruvate binding. Phosphoenolpyruvate contacts are provided by G92 and R120. The 3-phosphoshikimate site is built by S166, Q168, D312, and K339. Q168 serves as a coordination point for phosphoenolpyruvate. The active-site Proton acceptor is the D312. Phosphoenolpyruvate-binding residues include R343 and R385.

The protein belongs to the EPSP synthase family. In terms of assembly, monomer.

The protein resides in the cytoplasm. It carries out the reaction 3-phosphoshikimate + phosphoenolpyruvate = 5-O-(1-carboxyvinyl)-3-phosphoshikimate + phosphate. It functions in the pathway metabolic intermediate biosynthesis; chorismate biosynthesis; chorismate from D-erythrose 4-phosphate and phosphoenolpyruvate: step 6/7. Its function is as follows. Catalyzes the transfer of the enolpyruvyl moiety of phosphoenolpyruvate (PEP) to the 5-hydroxyl of shikimate-3-phosphate (S3P) to produce enolpyruvyl shikimate-3-phosphate and inorganic phosphate. The sequence is that of 3-phosphoshikimate 1-carboxyvinyltransferase from Streptococcus gordonii (strain Challis / ATCC 35105 / BCRC 15272 / CH1 / DL1 / V288).